Reading from the N-terminus, the 337-residue chain is GTP 3',8-cyclase (337 aa).

The Radical SAM core domain occupies 17-242 (AFQRRYYYLR…QSKGLLDGPA (226 aa)). Arg-26 lines the GTP pocket. The [4Fe-4S] cluster site is built by Cys-33 and Cys-37. Residue Tyr-39 participates in S-adenosyl-L-methionine binding. Cys-40 is a binding site for [4Fe-4S] cluster. Arg-76 lines the GTP pocket. Gly-80 provides a ligand contact to S-adenosyl-L-methionine. Thr-107 contributes to the GTP binding site. An S-adenosyl-L-methionine-binding site is contributed by Ser-131. Residue Lys-168 coordinates GTP. Met-202 contacts S-adenosyl-L-methionine. Residues Cys-265 and Cys-268 each coordinate [4Fe-4S] cluster. 270 to 272 (RLR) contacts GTP. [4Fe-4S] cluster is bound at residue Cys-282.

It belongs to the radical SAM superfamily. MoaA family. Monomer and homodimer. [4Fe-4S] cluster serves as cofactor.

The enzyme catalyses GTP + AH2 + S-adenosyl-L-methionine = (8S)-3',8-cyclo-7,8-dihydroguanosine 5'-triphosphate + 5'-deoxyadenosine + L-methionine + A + H(+). Its pathway is cofactor biosynthesis; molybdopterin biosynthesis. Functionally, catalyzes the cyclization of GTP to (8S)-3',8-cyclo-7,8-dihydroguanosine 5'-triphosphate. This is GTP 3',8-cyclase from Pasteurella multocida (strain Pm70).